A 243-amino-acid chain; its full sequence is UDP-2,3-diacylglucosamine hydrolase (243 aa).

Mn(2+) contacts are provided by D9, H11, D42, N79, and H114. Residue 79–80 (NR) coordinates substrate. 4 residues coordinate substrate: D122, S160, N164, and H195. 2 residues coordinate Mn(2+): H195 and H197.

The protein belongs to the LpxH family. It depends on Mn(2+) as a cofactor.

It localises to the cell inner membrane. It catalyses the reaction UDP-2-N,3-O-bis[(3R)-3-hydroxytetradecanoyl]-alpha-D-glucosamine + H2O = 2-N,3-O-bis[(3R)-3-hydroxytetradecanoyl]-alpha-D-glucosaminyl 1-phosphate + UMP + 2 H(+). It participates in glycolipid biosynthesis; lipid IV(A) biosynthesis; lipid IV(A) from (3R)-3-hydroxytetradecanoyl-[acyl-carrier-protein] and UDP-N-acetyl-alpha-D-glucosamine: step 4/6. Its function is as follows. Hydrolyzes the pyrophosphate bond of UDP-2,3-diacylglucosamine to yield 2,3-diacylglucosamine 1-phosphate (lipid X) and UMP by catalyzing the attack of water at the alpha-P atom. Involved in the biosynthesis of lipid A, a phosphorylated glycolipid that anchors the lipopolysaccharide to the outer membrane of the cell. This is UDP-2,3-diacylglucosamine hydrolase from Coxiella burnetii (strain RSA 331 / Henzerling II).